Here is a 421-residue protein sequence, read N- to C-terminus: Outer capsid protein P8 (421 aa).

This sequence belongs to the phytoreovirus outer capsid protein P8 family. Homotrimer. Homomultimer. Interacts with host peroxisomal glycolate oxidase (GOX). This interaction mediates its relocation to virus factories peripheral to host peroxisomes.

It is found in the virion. The protein localises to the host cytoplasm. Functionally, capsid protein which self-assembles to form the outer icosahedral capsid with a T=13 symmetry, about 70 nm in diameter and consisting of 780 molecules capsid proteins. This chain is Outer capsid protein P8, found in Alopecurus aequalis (Barnyard grass).